The primary structure comprises 354 residues: MKKIILVAGGTGGHFFPAVALGEELIKRGYEVHFIIDLRCKKYISQDMKVIFHILDLKRSGNIFLFLPRLSIAVLKAIRLLYNIKPSVIVGFGGYPVISSMFAAVFLRVPIIIHEQNSYLGKVNKFFTSFAKKIAISYKNIKNLPEFAKNKIVVTGGIVRKNIRNLGSVAGPRNDKLFTIFIFGGSQGAKLFSELIPASIQILIQKKPQLKLHIIQQAALDDQVKIKDIYLKLNITYELAEFFDNIALQYKDADLVISRAGASTIEELTYIGLPAIFIPLPSAADNHQYYNAKWLEDTKAGWCLEQNNISAGKLADKILDLISNTKILEDASHNLLKRRKEGHKLLSNLIEEVI.

Residues 11-13 (TGG), asparagine 117, arginine 160, serine 186, and glutamine 288 contribute to the UDP-N-acetyl-alpha-D-glucosamine site.

Belongs to the glycosyltransferase 28 family. MurG subfamily.

The protein resides in the cell inner membrane. The catalysed reaction is di-trans,octa-cis-undecaprenyl diphospho-N-acetyl-alpha-D-muramoyl-L-alanyl-D-glutamyl-meso-2,6-diaminopimeloyl-D-alanyl-D-alanine + UDP-N-acetyl-alpha-D-glucosamine = di-trans,octa-cis-undecaprenyl diphospho-[N-acetyl-alpha-D-glucosaminyl-(1-&gt;4)]-N-acetyl-alpha-D-muramoyl-L-alanyl-D-glutamyl-meso-2,6-diaminopimeloyl-D-alanyl-D-alanine + UDP + H(+). The protein operates within cell wall biogenesis; peptidoglycan biosynthesis. Cell wall formation. Catalyzes the transfer of a GlcNAc subunit on undecaprenyl-pyrophosphoryl-MurNAc-pentapeptide (lipid intermediate I) to form undecaprenyl-pyrophosphoryl-MurNAc-(pentapeptide)GlcNAc (lipid intermediate II). This is UDP-N-acetylglucosamine--N-acetylmuramyl-(pentapeptide) pyrophosphoryl-undecaprenol N-acetylglucosamine transferase from Rickettsia canadensis (strain McKiel).